A 965-amino-acid chain; its full sequence is Glycine dehydrogenase (decarboxylating) (965 aa).

Lysine 711 is subject to N6-(pyridoxal phosphate)lysine.

It belongs to the GcvP family. In terms of assembly, the glycine cleavage system is composed of four proteins: P, T, L and H. It depends on pyridoxal 5'-phosphate as a cofactor.

It catalyses the reaction N(6)-[(R)-lipoyl]-L-lysyl-[glycine-cleavage complex H protein] + glycine + H(+) = N(6)-[(R)-S(8)-aminomethyldihydrolipoyl]-L-lysyl-[glycine-cleavage complex H protein] + CO2. Functionally, the glycine cleavage system catalyzes the degradation of glycine. The P protein binds the alpha-amino group of glycine through its pyridoxal phosphate cofactor; CO(2) is released and the remaining methylamine moiety is then transferred to the lipoamide cofactor of the H protein. The protein is Glycine dehydrogenase (decarboxylating) of Psychrobacter cryohalolentis (strain ATCC BAA-1226 / DSM 17306 / VKM B-2378 / K5).